Here is a 194-residue protein sequence, read N- to C-terminus: MAKSSQRKQRDCVNQCKSKPGLSTSIPLRMSSYTFKRPVTRITPHPGNEVRYHQWEESLEKPQQVCWQRRLQGLQAYSSAGELSSTLDLANTLQKLVPSYTGGSLLEDLASGLEHSCPMPHLACSSDAVEIIPAEGVGISQLLCKQFLVTEEDIRKQEGKVKTVRERLAIALIADGLANEAEKVRDQEGRPEKR.

The tract at residues 1–104 (MAKSSQRKQR…KLVPSYTGGS (104 aa)) is transcription repressor.

It belongs to the MBD3L family. As to expression, highly expressed in testis. Detected at low levels in pancreas. Not detected in the other tissues tested.

The protein localises to the nucleus. Functionally, transcriptional repressor. In Homo sapiens (Human), this protein is Methyl-CpG-binding domain protein 3-like 1 (MBD3L1).